The primary structure comprises 164 residues: SsrA-binding protein (164 aa).

The interval 141–164 is disordered; that stretch reads KLHDKRQDEKQKSIKKEINSALKR. A compositionally biased stretch (basic and acidic residues) spans 145 to 158; the sequence is KRQDEKQKSIKKEI.

This sequence belongs to the SmpB family.

It localises to the cytoplasm. In terms of biological role, required for rescue of stalled ribosomes mediated by trans-translation. Binds to transfer-messenger RNA (tmRNA), required for stable association of tmRNA with ribosomes. tmRNA and SmpB together mimic tRNA shape, replacing the anticodon stem-loop with SmpB. tmRNA is encoded by the ssrA gene; the 2 termini fold to resemble tRNA(Ala) and it encodes a 'tag peptide', a short internal open reading frame. During trans-translation Ala-aminoacylated tmRNA acts like a tRNA, entering the A-site of stalled ribosomes, displacing the stalled mRNA. The ribosome then switches to translate the ORF on the tmRNA; the nascent peptide is terminated with the 'tag peptide' encoded by the tmRNA and targeted for degradation. The ribosome is freed to recommence translation, which seems to be the essential function of trans-translation. In Prochlorococcus marinus (strain AS9601), this protein is SsrA-binding protein.